A 340-amino-acid chain; its full sequence is uncharacterized protein (340 aa).

Residues 284-340 (DHSTPTNYQQETPASQQQLDQENEPIKPSKKSNSSSLPRGTTQPKSNSINRVSKLID) are disordered. Composition is skewed to polar residues over residues 286–303 (STPT…QQLD) and 320–334 (LPRG…SINR).

This is an uncharacterized protein from Mycoplasma genitalium (strain ATCC 33530 / DSM 19775 / NCTC 10195 / G37) (Mycoplasmoides genitalium).